Consider the following 923-residue polypeptide: Protocadherin gamma-B5 (923 aa).

The N-terminal stretch at 1–30 (MGRGTGELGRAERLPVLFLFLLSLFCPALC) is a signal peptide. Cadherin domains follow at residues 31-133 (EQIR…TPKF), 134-242 (TQNS…PPVF), 243-343 (NRDV…SPEV), 344-448 (TFHS…APVF), 449-558 (HQAS…APRV), and 566-671 (DGSA…LPDI). Residues 31 to 687 (EQIRYRIPEE…SDPQAELQFY (657 aa)) are Extracellular-facing. N-linked (GlcNAc...) asparagine glycans are attached at residues Asn-415 and Asn-541. A helical transmembrane segment spans residues 688 to 708 (LVVALALISVLFLLAVILAIA). Topologically, residues 709 to 923 (LRLRRSSSPA…KKKSGKKEKK (215 aa)) are cytoplasmic. Disordered regions lie at residues 794–832 (TSHPELQAPPNTDWRFSQAQRPGTSGSQNGDDTGTWPNN) and 893–923 (ATLTNAAGKRDGKAPAGGNGNKKKSGKKEKK). Residues 807 to 832 (WRFSQAQRPGTSGSQNGDDTGTWPNN) are compositionally biased toward polar residues. Over residues 913–923 (NKKKSGKKEKK) the composition is skewed to basic residues.

The protein resides in the cell membrane. Potential calcium-dependent cell-adhesion protein. May be involved in the establishment and maintenance of specific neuronal connections in the brain. The protein is Protocadherin gamma-B5 (PCDHGB5) of Pan troglodytes (Chimpanzee).